The primary structure comprises 537 residues: Lysine--tRNA ligase (537 aa).

The 'HIGH' region signature appears at 30–38 (PSGNIHIGN). Residues 276-280 (AMSSS) carry the 'KMSKS' region motif.

The protein belongs to the class-I aminoacyl-tRNA synthetase family.

Its subcellular location is the cytoplasm. The enzyme catalyses tRNA(Lys) + L-lysine + ATP = L-lysyl-tRNA(Lys) + AMP + diphosphate. The protein is Lysine--tRNA ligase of Methanosarcina barkeri.